Here is a 220-residue protein sequence, read N- to C-terminus: Peptide methionine sulfoxide reductase MsrA (220 aa).

Cys-59 is a catalytic residue.

It belongs to the MsrA Met sulfoxide reductase family.

The catalysed reaction is L-methionyl-[protein] + [thioredoxin]-disulfide + H2O = L-methionyl-(S)-S-oxide-[protein] + [thioredoxin]-dithiol. It catalyses the reaction [thioredoxin]-disulfide + L-methionine + H2O = L-methionine (S)-S-oxide + [thioredoxin]-dithiol. Functionally, has an important function as a repair enzyme for proteins that have been inactivated by oxidation. Catalyzes the reversible oxidation-reduction of methionine sulfoxide in proteins to methionine. The chain is Peptide methionine sulfoxide reductase MsrA from Corynebacterium kroppenstedtii (strain DSM 44385 / JCM 11950 / CIP 105744 / CCUG 35717).